We begin with the raw amino-acid sequence, 95 residues long: Small ribosomal subunit protein bS18 (95 aa).

It belongs to the bacterial ribosomal protein bS18 family. In terms of assembly, part of the 30S ribosomal subunit. Forms a tight heterodimer with protein bS6.

Its function is as follows. Binds as a heterodimer with protein bS6 to the central domain of the 16S rRNA, where it helps stabilize the platform of the 30S subunit. This chain is Small ribosomal subunit protein bS18, found in Rickettsia felis (strain ATCC VR-1525 / URRWXCal2) (Rickettsia azadi).